The primary structure comprises 99 residues: Beta-2-microglobulin (99 aa).

The Ig-like C1-type domain maps to Pro5–Val93. Cys25 and Cys80 are joined by a disulfide.

The protein belongs to the beta-2-microglobulin family. As to quaternary structure, heterodimer of an alpha chain and a beta chain. Beta-2-microglobulin is the beta-chain of major histocompatibility complex class I molecules.

The protein localises to the secreted. In terms of biological role, component of the class I major histocompatibility complex (MHC). Involved in the presentation of peptide antigens to the immune system. This chain is Beta-2-microglobulin (B2M), found in Cavia porcellus (Guinea pig).